A 292-amino-acid chain; its full sequence is ATP synthase gamma chain (292 aa).

This sequence belongs to the ATPase gamma chain family. F-type ATPases have 2 components, CF(1) - the catalytic core - and CF(0) - the membrane proton channel. CF(1) has five subunits: alpha(3), beta(3), gamma(1), delta(1), epsilon(1). CF(0) has three main subunits: a, b and c.

It is found in the cell membrane. Produces ATP from ADP in the presence of a proton gradient across the membrane. The gamma chain is believed to be important in regulating ATPase activity and the flow of protons through the CF(0) complex. This Streptococcus mutans serotype c (strain ATCC 700610 / UA159) protein is ATP synthase gamma chain.